The chain runs to 381 residues: Probable cyclic AMP-AMP-GMP nucleotide synthase (381 aa).

GTP-binding residues include Ser-53 and Arg-56. Residues Asp-69 and Asp-71 contribute to the active site. Mg(2+) is bound by residues Asp-69 and Asp-71. Arg-109 lines the GTP pocket. The active site involves Asp-121. Mg(2+)-binding residues include Asp-121 and Asp-196. Residues Arg-197, Arg-204, Thr-205, Gln-210, and Arg-307 each coordinate GTP. The interval 348–381 (GTKFPFPGPQGGDRSGGFTAPTQPAEPQKTGRFA) is disordered.

This sequence belongs to the CD-NTase family. D02 subfamily. The cofactor is Mg(2+).

The catalysed reaction is GTP + 2 ATP = 3',3',3'-cAAG + 3 diphosphate. Its function is as follows. Cyclic nucleotide synthase (second messenger synthase) of a CBASS antivirus system. CBASS (cyclic oligonucleotide-based antiphage signaling system) provides immunity against bacteriophage. The CD-NTase protein synthesizes cyclic nucleotides in response to infection; these serve as specific second messenger signals. The signals activate a diverse range of effectors, leading to bacterial cell death and thus abortive phage infection. Functionally, cyclic nucleotide synthase, synthesizes a tricyclic nucleotide with AMP and GMP moieties, probably 3',3',3'-cyclic AMP-AMP-GMP (3'3'3'-cAAG). Controls the activity of the associated CBASS effector protein. This Salmonella paratyphi B (Salmonella enterica subsp. enterica serovar Paratyphi B) protein is Probable cyclic AMP-AMP-GMP nucleotide synthase.